The chain runs to 295 residues: uncharacterized protein (295 aa).

A Sigma-54 factor interaction domain is found at 4-233 (IVVKSMAMEK…LQNTIERLVL (230 aa)).

This is an uncharacterized protein from Pseudomonas sp. (strain NS671).